A 282-amino-acid polypeptide reads, in one-letter code: 4-diphosphocytidyl-2-C-methyl-D-erythritol kinase (282 aa).

Lys9 is a catalytic residue. Position 98–108 (98–108 (PMGGGLGGGSS)) interacts with ATP. The active site involves Asp140.

This sequence belongs to the GHMP kinase family. IspE subfamily. In terms of assembly, homodimer.

It catalyses the reaction 4-CDP-2-C-methyl-D-erythritol + ATP = 4-CDP-2-C-methyl-D-erythritol 2-phosphate + ADP + H(+). It participates in isoprenoid biosynthesis; isopentenyl diphosphate biosynthesis via DXP pathway; isopentenyl diphosphate from 1-deoxy-D-xylulose 5-phosphate: step 3/6. Functionally, catalyzes the phosphorylation of the position 2 hydroxy group of 4-diphosphocytidyl-2C-methyl-D-erythritol. The protein is 4-diphosphocytidyl-2-C-methyl-D-erythritol kinase of Salmonella paratyphi B (strain ATCC BAA-1250 / SPB7).